A 622-amino-acid polypeptide reads, in one-letter code: Low affinity potassium transport system protein Kup (622 aa).

12 helical membrane-spanning segments follow: residues Leu9–Leu29, Val49–Leu69, Val103–Ile123, Pro137–Ile157, Val165–Leu185, Val213–Ala233, Trp247–Leu267, Pro276–Ala296, Ile337–Phe357, Leu363–Thr383, Phe396–Leu416, and Leu419–Thr439.

Belongs to the HAK/KUP transporter (TC 2.A.72) family.

Its subcellular location is the cell inner membrane. The catalysed reaction is K(+)(in) + H(+)(in) = K(+)(out) + H(+)(out). Responsible for the low-affinity transport of potassium into the cell. Likely operates as a K(+):H(+) symporter. This Escherichia coli O157:H7 protein is Low affinity potassium transport system protein Kup.